A 951-amino-acid chain; its full sequence is Bifunctional glutamine synthetase adenylyltransferase/adenylyl-removing enzyme (951 aa).

An adenylyl removase region spans residues 1-440; it reads MLPLPSELQI…VFDDLIGDET (440 aa). The interval 449–951 is adenylyl transferase; sequence HGLYKSLWQD…WLAANDANVS (503 aa).

The protein belongs to the GlnE family. The cofactor is Mg(2+).

It catalyses the reaction [glutamine synthetase]-O(4)-(5'-adenylyl)-L-tyrosine + phosphate = [glutamine synthetase]-L-tyrosine + ADP. The catalysed reaction is [glutamine synthetase]-L-tyrosine + ATP = [glutamine synthetase]-O(4)-(5'-adenylyl)-L-tyrosine + diphosphate. In terms of biological role, involved in the regulation of glutamine synthetase GlnA, a key enzyme in the process to assimilate ammonia. When cellular nitrogen levels are high, the C-terminal adenylyl transferase (AT) inactivates GlnA by covalent transfer of an adenylyl group from ATP to specific tyrosine residue of GlnA, thus reducing its activity. Conversely, when nitrogen levels are low, the N-terminal adenylyl removase (AR) activates GlnA by removing the adenylyl group by phosphorolysis, increasing its activity. The regulatory region of GlnE binds the signal transduction protein PII (GlnB) which indicates the nitrogen status of the cell. The polypeptide is Bifunctional glutamine synthetase adenylyltransferase/adenylyl-removing enzyme (Yersinia pseudotuberculosis serotype O:1b (strain IP 31758)).